The primary structure comprises 297 residues: uncharacterized protein (297 aa).

Glutamate 46 is an active-site residue.

The protein belongs to the PhzF family. In terms of assembly, homodimer and homotetramer.

This is an uncharacterized protein from Escherichia coli (strain K12).